The primary structure comprises 446 residues: Glutamyl-tRNA reductase (446 aa).

Residues threonine 49–arginine 52, serine 109, glutamate 114–glutamine 116, and glutamine 120 each bind substrate. Cysteine 50 acts as the Nucleophile in catalysis. An NADP(+)-binding site is contributed by glycine 189 to glycine 194.

Belongs to the glutamyl-tRNA reductase family. Homodimer.

It carries out the reaction (S)-4-amino-5-oxopentanoate + tRNA(Glu) + NADP(+) = L-glutamyl-tRNA(Glu) + NADPH + H(+). It participates in porphyrin-containing compound metabolism; protoporphyrin-IX biosynthesis; 5-aminolevulinate from L-glutamyl-tRNA(Glu): step 1/2. Its function is as follows. Catalyzes the NADPH-dependent reduction of glutamyl-tRNA(Glu) to glutamate 1-semialdehyde (GSA). This chain is Glutamyl-tRNA reductase, found in Priestia megaterium (Bacillus megaterium).